The primary structure comprises 211 residues: Protein-L-isoaspartate O-methyltransferase (211 aa).

Ser-60 is an active-site residue.

Belongs to the methyltransferase superfamily. L-isoaspartyl/D-aspartyl protein methyltransferase family.

It is found in the cytoplasm. The catalysed reaction is [protein]-L-isoaspartate + S-adenosyl-L-methionine = [protein]-L-isoaspartate alpha-methyl ester + S-adenosyl-L-homocysteine. Catalyzes the methyl esterification of L-isoaspartyl residues in peptides and proteins that result from spontaneous decomposition of normal L-aspartyl and L-asparaginyl residues. It plays a role in the repair and/or degradation of damaged proteins. This is Protein-L-isoaspartate O-methyltransferase from Pseudomonas fluorescens (strain Pf0-1).